The chain runs to 263 residues: 3-methyl-2-oxobutanoate hydroxymethyltransferase (263 aa).

Positions 45 and 84 each coordinate Mg(2+). 3-methyl-2-oxobutanoate-binding positions include 45-46 (DS), D84, and K112. E114 is a binding site for Mg(2+). The active-site Proton acceptor is the E181.

The protein belongs to the PanB family. As to quaternary structure, homodecamer; pentamer of dimers. Requires Mg(2+) as cofactor.

It localises to the cytoplasm. It catalyses the reaction 3-methyl-2-oxobutanoate + (6R)-5,10-methylene-5,6,7,8-tetrahydrofolate + H2O = 2-dehydropantoate + (6S)-5,6,7,8-tetrahydrofolate. It functions in the pathway cofactor biosynthesis; (R)-pantothenate biosynthesis; (R)-pantoate from 3-methyl-2-oxobutanoate: step 1/2. Functionally, catalyzes the reversible reaction in which hydroxymethyl group from 5,10-methylenetetrahydrofolate is transferred onto alpha-ketoisovalerate to form ketopantoate. This is 3-methyl-2-oxobutanoate hydroxymethyltransferase from Chromohalobacter salexigens (strain ATCC BAA-138 / DSM 3043 / CIP 106854 / NCIMB 13768 / 1H11).